The following is a 341-amino-acid chain: uncharacterized protein (341 aa).

A run of 4 helical transmembrane segments spans residues 8 to 28 (LMLT…PLII), 63 to 83 (LMYF…VFAL), 171 to 191 (IYIM…IALS), and 317 to 337 (EFLV…KIFL). In terms of domain architecture, VWFA spans 101–305 (DIVIVLDISP…SKKENLERKI (205 aa)).

The protein localises to the cell membrane. This is an uncharacterized protein from Borreliella burgdorferi (strain ATCC 35210 / DSM 4680 / CIP 102532 / B31) (Borrelia burgdorferi).